Here is a 542-residue protein sequence, read N- to C-terminus: Chaperonin GroEL 4 (542 aa).

ATP contacts are provided by residues 30–33 (TLGP), K51, 87–91 (DGTTT), G415, and D496.

The protein belongs to the chaperonin (HSP60) family. Forms a cylinder of 14 subunits composed of two heptameric rings stacked back-to-back. Interacts with the co-chaperonin GroES.

Its subcellular location is the cytoplasm. It carries out the reaction ATP + H2O + a folded polypeptide = ADP + phosphate + an unfolded polypeptide.. Together with its co-chaperonin GroES, plays an essential role in assisting protein folding. The GroEL-GroES system forms a nano-cage that allows encapsulation of the non-native substrate proteins and provides a physical environment optimized to promote and accelerate protein folding. This is Chaperonin GroEL 4 from Rhizobium etli (strain ATCC 51251 / DSM 11541 / JCM 21823 / NBRC 15573 / CFN 42).